The chain runs to 630 residues: Pro-interleukin-16 (630 aa).

2 disordered regions span residues 30 to 268 (ENPG…FPLT) and 316 to 343 (PKEG…ASDT). The span at 129–143 (IRASSSSSIKQRISS) shows a compositional bias: low complexity. Ser-220 bears the Phosphoserine mark. Positions 321-343 (SPTSSSNEDSAANGSAETSASDT) are enriched in polar residues. The interaction with PPP1R12A, PPP1R12B and PPP1R12C stretch occupies residues 404–500 (KQLDSIHVTI…IVTRKLTAES (97 aa)). 2 PDZ domains span residues 410-495 (HVTI…VTRK) and 532-617 (TVTL…IRRK).

Homotetramer. Pro-interleukin-16 interacts (via PDZ 2 domain) with PPP1R12A, PPP1R12B and PPP1R12C. Pro-interleukin-16 interacts with GRIN2A. Pro-interleukin-16 interacts with GABPB1. Pro-interleukin-16 interacts (via PDZ 3 domain) with HDAC3.

It localises to the secreted. It is found in the cytoplasm. The protein resides in the nucleus. Interleukin-16 stimulates a migratory response in CD4+ lymphocytes, monocytes, and eosinophils. Primes CD4+ T-cells for IL-2 and IL-15 responsiveness. Also induces T-lymphocyte expression of interleukin 2 receptor. Ligand for CD4. In terms of biological role, pro-interleukin-16 is involved in cell cycle progression in T-cells. Appears to be involved in transcriptional regulation of SKP2 and is probably part of a transcriptional repression complex on the core promoter of the SKP2 gene. May act as a scaffold for GABPB1 (the DNA-binding subunit the GABP transcription factor complex) and HDAC3 thus maintaining transcriptional repression and blocking cell cycle progression in resting T-cells. The chain is Pro-interleukin-16 (IL16) from Macaca mulatta (Rhesus macaque).